We begin with the raw amino-acid sequence, 75 residues long: Metallothionein-like protein 1B (75 aa).

The protein belongs to the metallothionein superfamily. Type 15 family.

In terms of biological role, metallothioneins have a high content of cysteine residues that bind various heavy metals. This chain is Metallothionein-like protein 1B (MT1B), found in Vicia faba (Broad bean).